Here is a 1049-residue protein sequence, read N- to C-terminus: Tegument protein pp150 (1049 aa).

2 disordered regions span residues 397–549 and 659–945; these read EERQ…DPRF and PFRM…YPAV. Residues 428–439 are compositionally biased toward acidic residues; the sequence is ADEDDDDDDDDE. Residues 452 to 462 are compositionally biased toward gly residues; that stretch reads SGKGAASGGGV. A compositionally biased stretch (low complexity) spans 463–474; the sequence is SSIFSGLLSSGS. Over residues 475–490 the composition is skewed to polar residues; the sequence is QKPTSGPLNIPQQQQR. Residues 509-525 are compositionally biased toward basic and acidic residues; it reads VRRDSAWDVRPLTETRG. Positions 672-688 are enriched in low complexity; sequence TVSTTPRRPSTPRAAVT. Positions 710-722 are enriched in acidic residues; that stretch reads PVEDSEEEDDDSS. Residues 731–743 are compositionally biased toward polar residues; the sequence is GHTTPSSDYNNDV. Residues 745–757 are compositionally biased toward low complexity; it reads SPPSQTPEQSTPS. Polar residues-rich tracts occupy residues 766 to 776, 791 to 800, and 808 to 835; these read SPMTTTSTSQK, RAQTVTSTPV, and VSGT…SRNV. Low complexity-rich tracts occupy residues 836-855, 866-884, 912-928, and 936-945; these read TSGA…ASAS, SPAT…SPAK, VVGR…APGR, and ASTTPTYPAV. A glycan (O-linked (GlcNAc) serine; by host) is linked at S922. O-linked (GlcNAc) serine; by host glycosylation occurs at S953. A disordered region spans residues 1006 to 1032; that stretch reads DLSSPQKSGTGPQPGSAGMGGAKTPSD. The segment covering 1008-1018 has biased composition (polar residues); the sequence is SSPQKSGTGPQ.

The protein belongs to the herpesviridae large structural phosphoprotein family. As to quaternary structure, interacts with host BICD1 and RAB6A. Interacts with small capsid protein UL48A; this interaction links together the capsid and pp150. Interacts with host CCNA2. Phosphorylated by host CCNA2.

It localises to the virion tegument. The protein resides in the host cytoplasm. Its subcellular location is the host nucleus. In terms of biological role, participates in the last steps of viral maturation and release. Associates with nuclear capsids prior to DNA encapsidation and later preserves the integrity of nucleocapsids through secondary envelopment at the assembly compartment. Interacts with host CCNA2 and thereby blocks the onset of lytic gene expression to promote establishment of a quiescent state of infection in undifferentiated cells. This chain is Tegument protein pp150 (UL32), found in Homo sapiens (Human).